Here is a 347-residue protein sequence, read N- to C-terminus: tRNA N6-adenosine threonylcarbamoyltransferase (347 aa).

2 residues coordinate Fe cation: H115 and H119. Substrate is bound by residues 137–141 (LASGG), D170, G183, and N281. D309 serves as a coordination point for Fe cation.

It belongs to the KAE1 / TsaD family. Fe(2+) serves as cofactor.

It localises to the cytoplasm. The enzyme catalyses L-threonylcarbamoyladenylate + adenosine(37) in tRNA = N(6)-L-threonylcarbamoyladenosine(37) in tRNA + AMP + H(+). Functionally, required for the formation of a threonylcarbamoyl group on adenosine at position 37 (t(6)A37) in tRNAs that read codons beginning with adenine. Is involved in the transfer of the threonylcarbamoyl moiety of threonylcarbamoyl-AMP (TC-AMP) to the N6 group of A37, together with TsaE and TsaB. TsaD likely plays a direct catalytic role in this reaction. In Methylorubrum extorquens (strain CM4 / NCIMB 13688) (Methylobacterium extorquens), this protein is tRNA N6-adenosine threonylcarbamoyltransferase.